We begin with the raw amino-acid sequence, 124 residues long: SETAAEKFERQHMDSYSSSSSNSNYCNQMMKRREMTDGWCKPVNTFIHESLEDVQAVCSQKSVTCKNGQTNCHQSSTTMHITDCRETGSSKYPNCAYKASNLKKHIIIACEGNPYVPVHFDASV.

A compositionally biased stretch (basic and acidic residues) spans 1–13 (SETAAEKFERQHM). Residues 1-23 (SETAAEKFERQHMDSYSSSSSNS) form a disordered region. Residues Lys-7 and Arg-10 each contribute to the substrate site. His-12 acts as the Proton acceptor in catalysis. Intrachain disulfides connect Cys-26–Cys-84, Cys-40–Cys-95, Cys-58–Cys-110, and Cys-65–Cys-72. Residues 41 to 45 (KPVNT), Lys-66, and Arg-85 each bind substrate. His-119 serves as the catalytic Proton donor.

It belongs to the pancreatic ribonuclease family. In terms of assembly, monomer. Interacts with and forms tight 1:1 complexes with RNH1. Dimerization of two such complexes may occur. Interaction with RNH1 inhibits this protein. As to expression, pancreas.

It is found in the secreted. The enzyme catalyses an [RNA] containing cytidine + H2O = an [RNA]-3'-cytidine-3'-phosphate + a 5'-hydroxy-ribonucleotide-3'-[RNA].. The catalysed reaction is an [RNA] containing uridine + H2O = an [RNA]-3'-uridine-3'-phosphate + a 5'-hydroxy-ribonucleotide-3'-[RNA].. Its function is as follows. Endonuclease that catalyzes the cleavage of RNA on the 3' side of pyrimidine nucleotides. Acts on single-stranded and double-stranded RNA. The chain is Ribonuclease pancreatic (RNASE1) from Camelus dromedarius (Dromedary).